The chain runs to 439 residues: Probable N-acetylmuramidase (439 aa).

Residues 1 to 57 form the signal peptide; it reads MPVSRIKVKNRHLKKKAKKPLAFYKPATKFAGAVLIAGTLTTTHELLLQQTSPMVQA. 2 disordered regions span residues 218–241 and 287–320; these read SAGT…TSST and SSSS…PASQ. A LysM 1 domain is found at 241–284; sequence TTYTVKSGDTLWGISQKYGISVAQIQSANNLKSTVIYIGQKLVL. The span at 287 to 319 shows a compositional bias: low complexity; that stretch reads SSSSSNTNSSTSSGNSAGTTTPTTSVTPAKPAS. The 44-residue stretch at 321 to 364 folds into the LysM 2 domain; it reads TTIKVKSGDTLWGLSVKYKTTIAQLKSWNHLNSDTIFIGQNLIV. Positions 372–393 are disordered; that stretch reads SSSTGSSSASTSSTSNSSAASN. The LysM 3 domain maps to 395 to 438; sequence SIHKVVKGDTLWGLSQKSGSPIASIKAWNHLSSDTILIGQYLRI.

It belongs to the glycosyl hydrolase 73 family.

The protein resides in the secreted. It catalyses the reaction Hydrolysis of (1-&gt;4)-beta-linkages between N-acetylmuramic acid and N-acetyl-D-glucosamine residues in a peptidoglycan and between N-acetyl-D-glucosamine residues in chitodextrins.. In terms of biological role, required for cell separation during growth. The chain is Probable N-acetylmuramidase (acmA) from Lactococcus lactis subsp. lactis (strain IL1403) (Streptococcus lactis).